Reading from the N-terminus, the 242-residue chain is Triosephosphate isomerase (242 aa).

Residue 8-10 participates in substrate binding; sequence NWK. The active-site Electrophile is H91. E155 functions as the Proton acceptor in the catalytic mechanism. The substrate site is built by G161 and S192.

It belongs to the triosephosphate isomerase family. Homodimer.

Its subcellular location is the cytoplasm. It catalyses the reaction D-glyceraldehyde 3-phosphate = dihydroxyacetone phosphate. It participates in carbohydrate biosynthesis; gluconeogenesis. Its pathway is carbohydrate degradation; glycolysis; D-glyceraldehyde 3-phosphate from glycerone phosphate: step 1/1. In terms of biological role, involved in the gluconeogenesis. Catalyzes stereospecifically the conversion of dihydroxyacetone phosphate (DHAP) to D-glyceraldehyde-3-phosphate (G3P). The sequence is that of Triosephosphate isomerase from Wolbachia pipientis wMel.